The primary structure comprises 234 residues: Synaptogyrin-4 (234 aa).

The region spanning 18-169 (FLKRPKAITR…QAYLAFQELR (152 aa)) is the MARVEL domain. A run of 4 helical transmembrane segments spans residues 25-45 (ITRIFAGVFSLIVFSSLLTDG), 66-86 (CSIAVGAGLLAFLSSLAFLAL), 104-124 (LLDLILAVIWAGVWAVGFCFL), and 145-165 (AAITFSFFSILVWIFQAYLAF). Residues 191 to 226 (SPPSAASPVNTPTTGPHGPSYASSSLSPYLSTPKAP) form a disordered region. A compositionally biased stretch (low complexity) spans 209–221 (PSYASSSLSPYLS).

It belongs to the synaptogyrin family.

The protein resides in the membrane. This is Synaptogyrin-4 (SYNGR4) from Bos taurus (Bovine).